We begin with the raw amino-acid sequence, 367 residues long: 3-dehydroquinate synthase (367 aa).

Residues 108–112 (GVIGD), 132–133 (TT), Lys-145, and Lys-154 contribute to the NAD(+) site. 3 residues coordinate Zn(2+): Glu-187, His-249, and His-267.

Belongs to the sugar phosphate cyclases superfamily. Dehydroquinate synthase family. Co(2+) is required as a cofactor. The cofactor is Zn(2+). It depends on NAD(+) as a cofactor.

The protein resides in the cytoplasm. It catalyses the reaction 7-phospho-2-dehydro-3-deoxy-D-arabino-heptonate = 3-dehydroquinate + phosphate. The protein operates within metabolic intermediate biosynthesis; chorismate biosynthesis; chorismate from D-erythrose 4-phosphate and phosphoenolpyruvate: step 2/7. Functionally, catalyzes the conversion of 3-deoxy-D-arabino-heptulosonate 7-phosphate (DAHP) to dehydroquinate (DHQ). In Paracoccus denitrificans (strain Pd 1222), this protein is 3-dehydroquinate synthase.